The following is a 145-amino-acid chain: MKHIVATLFGILFATAANAAGDSHVLASFPELERALTTGKPVTVTVDLGMCTPATSDTPSTKTRGGVSIDGYRITSDGTLAFADQHFTIDRDGKPVIQFLRYRIRPDGGAEFTMVVFNVPSYERKGTSRVYKCSIGHGLSFFSSQ.

This is an uncharacterized protein from Sinorhizobium fredii (strain NBRC 101917 / NGR234).